The sequence spans 227 residues: MAYPMQLGFQDATSPIMEELLHFHDHTLMIVFLISSLVLYVISLMLTTKLTHTSTMDAQEVETIWTILPAIILILIALPSLRILYMMDEINNPSLTVKTMGHQWYWSYEYTDYEDLSFDSYMIPTSELKPGELRLLEVDNRVVLPMEMTIRMLISSEDVLHSWAVPSLGLKTDAIPGRLNQTTLMSARPGLYYGQCSEICGSNHSFMPIVLELVPLKYFEKWSASML.

Topologically, residues 1–14 are mitochondrial intermembrane; the sequence is MAYPMQLGFQDATS. The helical transmembrane segment at 15 to 45 threads the bilayer; sequence PIMEELLHFHDHTLMIVFLISSLVLYVISLM. Over 46–59 the chain is Mitochondrial matrix; the sequence is LTTKLTHTSTMDAQ. A helical transmembrane segment spans residues 60 to 87; sequence EVETIWTILPAIILILIALPSLRILYMM. Over 88 to 227 the chain is Mitochondrial intermembrane; sequence DEINNPSLTV…YFEKWSASML (140 aa). Cu cation contacts are provided by His161, Cys196, Glu198, Cys200, His204, and Met207. Glu198 is a Mg(2+) binding site.

It belongs to the cytochrome c oxidase subunit 2 family. In terms of assembly, component of the cytochrome c oxidase (complex IV, CIV), a multisubunit enzyme composed of 14 subunits. The complex is composed of a catalytic core of 3 subunits MT-CO1, MT-CO2 and MT-CO3, encoded in the mitochondrial DNA, and 11 supernumerary subunits COX4I, COX5A, COX5B, COX6A, COX6B, COX6C, COX7A, COX7B, COX7C, COX8 and NDUFA4, which are encoded in the nuclear genome. The complex exists as a monomer or a dimer and forms supercomplexes (SCs) in the inner mitochondrial membrane with NADH-ubiquinone oxidoreductase (complex I, CI) and ubiquinol-cytochrome c oxidoreductase (cytochrome b-c1 complex, complex III, CIII), resulting in different assemblies (supercomplex SCI(1)III(2)IV(1) and megacomplex MCI(2)III(2)IV(2)). Found in a complex with TMEM177, COA6, COX18, COX20, SCO1 and SCO2. Interacts with TMEM177 in a COX20-dependent manner. Interacts with COX20. Interacts with COX16. Cu cation is required as a cofactor.

Its subcellular location is the mitochondrion inner membrane. It catalyses the reaction 4 Fe(II)-[cytochrome c] + O2 + 8 H(+)(in) = 4 Fe(III)-[cytochrome c] + 2 H2O + 4 H(+)(out). Component of the cytochrome c oxidase, the last enzyme in the mitochondrial electron transport chain which drives oxidative phosphorylation. The respiratory chain contains 3 multisubunit complexes succinate dehydrogenase (complex II, CII), ubiquinol-cytochrome c oxidoreductase (cytochrome b-c1 complex, complex III, CIII) and cytochrome c oxidase (complex IV, CIV), that cooperate to transfer electrons derived from NADH and succinate to molecular oxygen, creating an electrochemical gradient over the inner membrane that drives transmembrane transport and the ATP synthase. Cytochrome c oxidase is the component of the respiratory chain that catalyzes the reduction of oxygen to water. Electrons originating from reduced cytochrome c in the intermembrane space (IMS) are transferred via the dinuclear copper A center (CU(A)) of subunit 2 and heme A of subunit 1 to the active site in subunit 1, a binuclear center (BNC) formed by heme A3 and copper B (CU(B)). The BNC reduces molecular oxygen to 2 water molecules using 4 electrons from cytochrome c in the IMS and 4 protons from the mitochondrial matrix. This is Cytochrome c oxidase subunit 2 (MT-CO2) from Gazella spekei (Speke's gazelle).